The following is a 284-amino-acid chain: Pantothenate synthetase (284 aa).

An ATP-binding site is contributed by 30-37; it reads MGNLHNAH. Catalysis depends on His37, which acts as the Proton donor. Residue Gln61 coordinates (R)-pantoate. Beta-alanine is bound at residue Gln61. Residue 149 to 152 participates in ATP binding; it reads GIKD. Gln155 is a binding site for (R)-pantoate. Residues Val178 and 186–189 each bind ATP; that span reads MSSR.

The protein belongs to the pantothenate synthetase family. Homodimer.

It localises to the cytoplasm. It carries out the reaction (R)-pantoate + beta-alanine + ATP = (R)-pantothenate + AMP + diphosphate + H(+). The protein operates within cofactor biosynthesis; (R)-pantothenate biosynthesis; (R)-pantothenate from (R)-pantoate and beta-alanine: step 1/1. In terms of biological role, catalyzes the condensation of pantoate with beta-alanine in an ATP-dependent reaction via a pantoyl-adenylate intermediate. The polypeptide is Pantothenate synthetase (Saccharophagus degradans (strain 2-40 / ATCC 43961 / DSM 17024)).